Consider the following 290-residue polypeptide: AA9 family lytic polysaccharide monooxygenase A (290 aa).

Residues 1–17 form the signal peptide; that stretch reads MKLSLLASVALVPFVSA. Cu(2+) contacts are provided by His18 and His101. Cys67 and Cys189 are oxidised to a cystine. His176 is an O2 binding site. Residue Tyr187 participates in Cu(2+) binding. Asn220 and Asn254 each carry an N-linked (GlcNAc...) asparagine glycan. Residues 240-290 form a disordered region; it reads GGSGSGSSSYSKVANVTSSDESSQSGASSSQGTVSTCPNKYNRRHARQFKP. Low complexity predominate over residues 245–275; the sequence is GSSSYSKVANVTSSDESSQSGASSSQGTVST. Basic residues predominate over residues 280–290; sequence YNRRHARQFKP.

This sequence belongs to the polysaccharide monooxygenase AA9 family. The cofactor is Cu(2+).

The protein resides in the secreted. It catalyses the reaction [(1-&gt;4)-beta-D-glucosyl]n+m + reduced acceptor + O2 = 4-dehydro-beta-D-glucosyl-[(1-&gt;4)-beta-D-glucosyl]n-1 + [(1-&gt;4)-beta-D-glucosyl]m + acceptor + H2O.. Its function is as follows. Lytic polysaccharide monooxygenase (LPMO) that depolymerizes crystalline and amorphous polysaccharides via the oxidation of scissile alpha- or beta-(1-4)-glycosidic bonds, yielding exclusively C1 oxidation products. Catalysis by LPMOs requires the reduction of the active-site copper from Cu(II) to Cu(I) by a reducing agent and H(2)O(2) or O(2) as a cosubstrate. In Aspergillus fumigatus (strain ATCC MYA-4609 / CBS 101355 / FGSC A1100 / Af293) (Neosartorya fumigata), this protein is AA9 family lytic polysaccharide monooxygenase A.